The following is a 221-amino-acid chain: Eukaryotic translation initiation factor NCBP (221 aa).

This sequence belongs to the eukaryotic initiation factor 4E family. As to quaternary structure, EIF4F is a multi-subunit complex, the composition of which varies with external and internal environmental conditions. It is composed of at least EIF4A, EIF4E and EIF4G. EIF4E is also known to interact with other partners. In higher plants two isoforms of EIF4F have been identified, named isoform EIF4F and isoform EIF(iso)4F. Isoform EIF4F has subunits p220 and p26, whereas isoform EIF(iso)4F has subunits p82 and p28.

Its function is as follows. Recognizes and binds the 7-methylguanosine-containing mRNA cap during an early step in the initiation of protein synthesis and facilitates ribosome binding by inducing the unwinding of the mRNAs secondary structures. This is Eukaryotic translation initiation factor NCBP (NCBP) from Arabidopsis thaliana (Mouse-ear cress).